The primary structure comprises 501 residues: Lysine--tRNA ligase (501 aa).

Residues Glu-406 and Glu-413 each coordinate Mg(2+).

The protein belongs to the class-II aminoacyl-tRNA synthetase family. Homodimer. It depends on Mg(2+) as a cofactor.

Its subcellular location is the cytoplasm. The enzyme catalyses tRNA(Lys) + L-lysine + ATP = L-lysyl-tRNA(Lys) + AMP + diphosphate. The protein is Lysine--tRNA ligase (lysS) of Halalkalibacterium halodurans (strain ATCC BAA-125 / DSM 18197 / FERM 7344 / JCM 9153 / C-125) (Bacillus halodurans).